The chain runs to 588 residues: Adenine deaminase (588 aa).

It belongs to the metallo-dependent hydrolases superfamily. Adenine deaminase family. In terms of assembly, homodimer. Requires Mn(2+) as cofactor.

The enzyme catalyses adenine + H2O + H(+) = hypoxanthine + NH4(+). The sequence is that of Adenine deaminase from Escherichia coli O6:H1 (strain CFT073 / ATCC 700928 / UPEC).